Reading from the N-terminus, the 524-residue chain is Glutamyl-tRNA(Gln) amidotransferase subunit A, mitochondrial (524 aa).

Active-site charge relay system residues include Lys-76 and Ser-171. Catalysis depends on Ser-195, which acts as the Acyl-ester intermediate.

The protein belongs to the amidase family. GatA subfamily. As to quaternary structure, subunit of the heterotrimeric GatCAB amidotransferase (AdT) complex, composed of A (qrsl1), B (gatb) and C (gatc) subunits.

It localises to the mitochondrion. It catalyses the reaction L-glutamyl-tRNA(Gln) + L-glutamine + ATP + H2O = L-glutaminyl-tRNA(Gln) + L-glutamate + ADP + phosphate + H(+). Allows the formation of correctly charged Gln-tRNA(Gln) through the transamidation of misacylated Glu-tRNA(Gln) in the mitochondria. The reaction takes place in the presence of glutamine and ATP through an activated gamma-phospho-Glu-tRNA(Gln). The polypeptide is Glutamyl-tRNA(Gln) amidotransferase subunit A, mitochondrial (qrsl1) (Xenopus tropicalis (Western clawed frog)).